Consider the following 104-residue polypeptide: Protein RnfH (104 aa).

A disordered region spans residues 80-104 (PLTADPKLNRKRRAKEKASAGKASN).

This sequence belongs to the UPF0125 (RnfH) family.

The polypeptide is Protein RnfH (Alcanivorax borkumensis (strain ATCC 700651 / DSM 11573 / NCIMB 13689 / SK2)).